The chain runs to 131 residues: L-ectoine synthase (131 aa).

It belongs to the ectoine synthase family.

The enzyme catalyses (2S)-4-acetamido-2-aminobutanoate = L-ectoine + H2O. The protein operates within amine and polyamine biosynthesis; ectoine biosynthesis; L-ectoine from L-aspartate 4-semialdehyde: step 3/3. Catalyzes the circularization of gamma-N-acetyl-alpha,gamma-diaminobutyric acid (ADABA) to ectoine (1,4,5,6-tetrahydro-2-methyl-4-pyrimidine carboxylic acid), which is an excellent osmoprotectant. The polypeptide is L-ectoine synthase (Bordetella bronchiseptica (strain ATCC BAA-588 / NCTC 13252 / RB50) (Alcaligenes bronchisepticus)).